Reading from the N-terminus, the 514-residue chain is MAQTLQMEIPNFGNSILECLNEQRLQGLYCDVSVVVKGHAFKAHRAVLAASSSYFRDLFNSSRSAVVELPAAVQPQSFQQILTFCYTGRLSMNMGDQFLLIYTAGFLQIQEIMEKGTEFFLKVSSPSCDSQGLHPEEAPSSEPQSPVAQILGWPACSTPLPLVSRVKTEQELDSVQCTPMAKRLWDSSQKEAGGSGGNNGSRKMAKFSTPDLAPNRMPQPVSVATATAAVAVVAVGGCVSGPSMSERTSPGTSSAYTSDSPSSYHNEEDEEEDAGEEGTDEQYRQICNMYTMYSMLNVGQTVEKVEALPEQVVLESHSRIRVRQDLASLPAELINQIGNRCHPKLYDEGDPSEKLELVTGTNVYITRAQLMNCHVSAGTRHKVLLRRLLASFFDRNTLANSCGTGIRSSTNDPRRKPLDSRVLHAVKYYCQNFAPNFKESEMNAIAADMCTNARRVVRKSWLPKTKPLHLVEGDNYSSFISDTGKIEPDMMSMEHSFETASHDGEAGPSAEVLQ.

Residues 30–94 (CDVSVVVKGH…CYTGRLSMNM (65 aa)) form the BTB domain. K167 participates in a covalent cross-link: Glycyl lysine isopeptide (Lys-Gly) (interchain with G-Cter in SUMO1); alternate. Residue K167 forms a Glycyl lysine isopeptide (Lys-Gly) (interchain with G-Cter in SUMO2); alternate linkage. K182 participates in a covalent cross-link: Glycyl lysine isopeptide (Lys-Gly) (interchain with G-Cter in SUMO2). 2 disordered regions span residues 183-218 (RLWDSSQKEAGGSGGNNGSRKMAKFSTPDLAPNRMP) and 241-279 (GPSMSERTSPGTSSAYTSDSPSSYHNEEDEEEDAGEEGT). S187 carries the phosphoserine modification. Residues 242-251 (PSMSERTSPG) show a composition bias toward polar residues. S245 is modified (phosphoserine; by PKC). Over residues 252–264 (TSSAYTSDSPSSY) the composition is skewed to low complexity. Residues 267-279 (EEDEEEDAGEEGT) show a composition bias toward acidic residues. Residues K304, K438, K466, and K485 each participate in a glycyl lysine isopeptide (Lys-Gly) (interchain with G-Cter in SUMO2) cross-link. Positions 360-457 (GTNVYITRAQ…DMCTNARRVV (98 aa)) constitute a BEN domain. Phosphoserine occurs at positions 492 and 496.

In terms of assembly, homooligomer; mediated by the BTB domain. Both isoforms interact with HDAC3 and HDAC4. Interacts (via BTB domain) with CUL3, PSMD7 and RCOR1. Post-translationally, phosphorylated by protein kinase C (PKC). In terms of tissue distribution, highly expressed in the hippocampus, brain cortex, cerebellum and brainstem. Expressed in the nucleus accumbens, olfactory tubercle, the striatum, frontal and parietal cortex and ventral pallidum. Weakly expressed in the heart, liver, kidney, spleen, testis, and skeletal muscle. Isoform 2 is expressed in the brain and liver, less abundantly expressed in the brain than isoform 1.

Its subcellular location is the nucleus. The protein resides in the cytoplasm. Its function is as follows. Functions as a transcriptional repressor. Isoform 1 is a stronger transcriptional repressor than isoform 2. Seems to function as a transcriptional corepressor in neuronal cells through recruitment of HDAC3 and HDAC4. Contributes to tumor progression, and tumor cell proliferation and survival. This may be mediated at least in part through repressing transcriptional activity of GADD45GIP1. Required for recruiting the proteasome from the nucleus to the cytoplasm and dendritic spines. In Rattus norvegicus (Rat), this protein is Nucleus accumbens-associated protein 1 (Nacc1).